The sequence spans 91 residues: Large ribosomal subunit protein uL23c (91 aa).

This sequence belongs to the universal ribosomal protein uL23 family. As to quaternary structure, part of the 50S ribosomal subunit.

The protein localises to the plastid. It is found in the chloroplast. Binds to 23S rRNA. The protein is Large ribosomal subunit protein uL23c (rpl23) of Pinus thunbergii (Japanese black pine).